The primary structure comprises 486 residues: ATP synthase subunit beta (486 aa).

164 to 171 is an ATP binding site; sequence GGAGVGKT.

Belongs to the ATPase alpha/beta chains family. F-type ATPases have 2 components, CF(1) - the catalytic core - and CF(0) - the membrane proton channel. CF(1) has five subunits: alpha(3), beta(3), gamma(1), delta(1), epsilon(1). CF(0) has four main subunits: a(1), b(1), b'(1) and c(9-12).

The protein localises to the cellular thylakoid membrane. It carries out the reaction ATP + H2O + 4 H(+)(in) = ADP + phosphate + 5 H(+)(out). Its function is as follows. Produces ATP from ADP in the presence of a proton gradient across the membrane. The catalytic sites are hosted primarily by the beta subunits. This Prochlorococcus marinus (strain MIT 9215) protein is ATP synthase subunit beta.